The chain runs to 96 residues: UPF0235 protein Helmi_20270 (96 aa).

Belongs to the UPF0235 family.

This chain is UPF0235 protein Helmi_20270, found in Heliobacterium modesticaldum (strain ATCC 51547 / Ice1).